We begin with the raw amino-acid sequence, 302 residues long: Zinc import ATP-binding protein ZnuC (302 aa).

The region spanning 13–228 (VSLANAGVRR…PEYLKLFGRR (216 aa)) is the ABC transporter domain. 45 to 52 (GPNGSGKS) serves as a coordination point for ATP.

Belongs to the ABC transporter superfamily. Zinc importer (TC 3.A.1.15.5) family. The complex is composed of two ATP-binding proteins (ZnuC), two transmembrane proteins (ZnuB) and a solute-binding protein (ZnuA).

It localises to the cell inner membrane. The catalysed reaction is Zn(2+)(out) + ATP(in) + H2O(in) = Zn(2+)(in) + ADP(in) + phosphate(in) + H(+)(in). Functionally, part of the ABC transporter complex ZnuABC involved in zinc import. Responsible for energy coupling to the transport system. The sequence is that of Zinc import ATP-binding protein ZnuC from Rhizobium meliloti (strain 1021) (Ensifer meliloti).